The chain runs to 384 residues: S-adenosylmethionine synthase (384 aa).

His15 is a binding site for ATP. Asp17 is a Mg(2+) binding site. Glu43 contributes to the K(+) binding site. L-methionine-binding residues include Glu56 and Gln99. The interval 99 to 109 (QSPDINQGVDR) is flexible loop. ATP-binding positions include 164 to 166 (DAK), 231 to 232 (RF), Asp240, 246 to 247 (RK), Ala263, and Lys267. Position 240 (Asp240) interacts with L-methionine. Lys271 is an L-methionine binding site.

It belongs to the AdoMet synthase family. As to quaternary structure, homotetramer; dimer of dimers. Mg(2+) serves as cofactor. K(+) is required as a cofactor.

The protein localises to the cytoplasm. It carries out the reaction L-methionine + ATP + H2O = S-adenosyl-L-methionine + phosphate + diphosphate. The protein operates within amino-acid biosynthesis; S-adenosyl-L-methionine biosynthesis; S-adenosyl-L-methionine from L-methionine: step 1/1. Catalyzes the formation of S-adenosylmethionine (AdoMet) from methionine and ATP. The overall synthetic reaction is composed of two sequential steps, AdoMet formation and the subsequent tripolyphosphate hydrolysis which occurs prior to release of AdoMet from the enzyme. This chain is S-adenosylmethionine synthase, found in Shewanella halifaxensis (strain HAW-EB4).